Reading from the N-terminus, the 863-residue chain is Alanine--tRNA ligase (863 aa).

Zn(2+)-binding residues include histidine 552, histidine 556, cysteine 654, and histidine 658.

It belongs to the class-II aminoacyl-tRNA synthetase family. Zn(2+) serves as cofactor.

The protein resides in the cytoplasm. It catalyses the reaction tRNA(Ala) + L-alanine + ATP = L-alanyl-tRNA(Ala) + AMP + diphosphate. Catalyzes the attachment of alanine to tRNA(Ala) in a two-step reaction: alanine is first activated by ATP to form Ala-AMP and then transferred to the acceptor end of tRNA(Ala). Also edits incorrectly charged Ser-tRNA(Ala) and Gly-tRNA(Ala) via its editing domain. In Nitrosomonas europaea (strain ATCC 19718 / CIP 103999 / KCTC 2705 / NBRC 14298), this protein is Alanine--tRNA ligase.